Reading from the N-terminus, the 72-residue chain is Translation initiation factor IF-1 (72 aa).

An S1-like domain is found at 1–72 (MAKQDVIELE…TRGRITYRYK (72 aa)).

This sequence belongs to the IF-1 family. In terms of assembly, component of the 30S ribosomal translation pre-initiation complex which assembles on the 30S ribosome in the order IF-2 and IF-3, IF-1 and N-formylmethionyl-tRNA(fMet); mRNA recruitment can occur at any time during PIC assembly.

It localises to the cytoplasm. Functionally, one of the essential components for the initiation of protein synthesis. Stabilizes the binding of IF-2 and IF-3 on the 30S subunit to which N-formylmethionyl-tRNA(fMet) subsequently binds. Helps modulate mRNA selection, yielding the 30S pre-initiation complex (PIC). Upon addition of the 50S ribosomal subunit IF-1, IF-2 and IF-3 are released leaving the mature 70S translation initiation complex. The sequence is that of Translation initiation factor IF-1 from Staphylococcus aureus (strain USA300 / TCH1516).